The chain runs to 199 residues: Outer-membrane lipoprotein LolB (199 aa).

The N-terminal stretch at 1 to 28 (MSACPAPRSPVRWLHAFTLFLLLAVLAG) is a signal peptide. A lipid anchor (N-palmitoyl cysteine) is attached at Cys29. Cys29 is lipidated: S-diacylglycerol cysteine.

This sequence belongs to the LolB family. As to quaternary structure, monomer.

It is found in the cell outer membrane. In terms of biological role, plays a critical role in the incorporation of lipoproteins in the outer membrane after they are released by the LolA protein. The sequence is that of Outer-membrane lipoprotein LolB from Bordetella pertussis (strain Tohama I / ATCC BAA-589 / NCTC 13251).